Consider the following 2272-residue polypeptide: Voltage-dependent R-type calcium channel subunit alpha-1E (2272 aa).

The segment at 1 to 40 (MARFGEAVVVGRPGSGDGDSDQSRNRQGTPVPASGPAAAY) is disordered. Residues 1 to 90 (MARFGEAVVV…KYAKKLIDWP (90 aa)) are Cytoplasmic-facing. Phosphoserine occurs at positions 15 and 20. An I repeat occupies 77–355 (NIVRKYAKKL…LVLGVLSGEF (279 aa)). The chain crosses the membrane as a helical span at residues 91–109 (PFEYMILATIIANCIVLAL). Residues 110–128 (EQHLPEDDKTPMSRRLEKT) are Extracellular-facing. A helical transmembrane segment spans residues 129 to 147 (EPYFIGIFCFEAGIKIVAL). At 148–159 (GFIFHKGSYLRN) the chain is on the cytoplasmic side. A helical transmembrane segment spans residues 160–174 (GWNVMDFIVVLSGIL). The Extracellular segment spans residues 175-186 (ATAGTHFNTHVD). A helical transmembrane segment spans residues 187 to 206 (LRALRAVRVLRPLKLVSGIP). Residues 207-224 (SLQIVLKSIMKAMVPLLQ) lie on the Cytoplasmic side of the membrane. Residues 225–245 (IGLLLFFAILMFAIIGLEFYS) traverse the membrane as a helical segment. Topologically, residues 246 to 327 (GKLHRACFMN…NTNDALGATW (82 aa)) are extracellular. N-linked (GlcNAc...) asparagine glycosylation is present at Asn255. The helical transmembrane segment at 328–351 (NWLYFIPLIIIGSFFVLNLVLGVL) threads the bilayer. At 352–477 (SGEFAKERER…ISIRHMVKSQ (126 aa)) the chain is on the cytoplasmic side. Positions 375–392 (QQIERELNGYRAWIDKAE) are binding to the beta subunit. Asp427 is a binding site for Ca(2+). Ser428 carries the post-translational modification Phosphoserine. Ser429, Glu431, Cys433, and Ser438 together coordinate Ca(2+). Thr441 bears the Phosphothreonine mark. Residues 463-707 (ERLLRISIRH…VFLAIAVDNL (245 aa)) form an II repeat. The chain crosses the membrane as a helical span at residues 478–497 (VFYWIVLSVVALNTACVAIV). Over 498–510 (HHNQPQWLTHLLY) the chain is Extracellular. Residues 511-530 (YAEFLFLGLFLLEMSLKMYG) traverse the membrane as a helical segment. At 531–539 (MGPRLYFHS) the chain is on the cytoplasmic side. Residues 540-558 (SFNCFDFGVTVGSIFEVVW) traverse the membrane as a helical segment. The Extracellular portion of the chain corresponds to 559–568 (AIFRPGTSFG). A helical transmembrane segment spans residues 569-587 (ISVLRALRLLRIFKITKYW). Over 588–606 (ASLRNLVVSLMSSMKSIIS) the chain is Cytoplasmic. The chain crosses the membrane as a helical span at residues 607–626 (LLFLLFLFIVVFALLGMQLF). At 627-679 (GGRFNFNDGTPSANFDTFPAAIMTVFQILTGEDWNEVMYNGIRSQGGVSSGMW) the chain is on the extracellular side. A helical membrane pass occupies residues 680 to 704 (SAIYFIVLTLFGNYTLLNVFLAIAV). Over 705–1150 (DNLANAQELT…TTNPIRRACH (446 aa)) the chain is Cytoplasmic. Positions 730-777 (LQKAKEVSPMSAPNMPSIERDRRRRHHMSMWEPRSSHLRERRRRHHMS) are disordered. Phosphoserine is present on residues Ser737, Ser746, Ser794, Ser816, and Ser856. Disordered regions lie at residues 854 to 994 (GGSL…VPRG) and 1091 to 1127 (SNKT…RETG). The segment covering 914-927 (RHRQSQRRSRHRRV) has biased composition (basic residues). The span at 934-946 (SASASRSRSASQE) shows a compositional bias: low complexity. Ser948 is subject to Phosphoserine. Composition is skewed to basic and acidic residues over residues 956 to 985 (EGEK…DLRR) and 1094 to 1105 (TDGEASPLKEAE). A Phosphoserine modification is found at Ser1099. Residues 1143-1429 (NPIRRACHYI…IFVALIIITF (287 aa)) form an III repeat. A helical transmembrane segment spans residues 1151 to 1167 (YIVNLRYFEMCILLVIA). The Extracellular segment spans residues 1168–1191 (ASSIALAAEDPVLTNSERNKVLRY). Residues 1192–1211 (FDYVFTGVFTFEMVIKMIDQ) form a helical membrane-spanning segment. The Cytoplasmic portion of the chain corresponds to 1212 to 1219 (GLILQDGS). Residues 1220–1242 (YFRDLWNILDFVVVVGALVAFAL) traverse the membrane as a helical segment. Topologically, residues 1243–1256 (ANALGTNKGRDIKT) are extracellular. Residues 1257–1274 (IKSLRVLRVLRPLKTIKR) form a helical membrane-spanning segment. At 1275 to 1293 (LPKLKAVFDCVVTSLKNVF) the chain is on the cytoplasmic side. The helical transmembrane segment at 1294–1313 (NILIVYKLFMFIFAVIAVQL) threads the bilayer. The Extracellular segment spans residues 1314–1400 (FKGKFFYCTD…DRGPSRSNRM (87 aa)). A helical membrane pass occupies residues 1401 to 1424 (EMSIFYVVYFVVFPFFFVNIFVAL). At 1425-1481 (IIITFQEQGDKMMEECSLEKNERACIDFAISAKPLTRYMPQNRHTFQYRVWHFVVSP) the chain is on the cytoplasmic side. The stretch at 1466–1729 (NRHTFQYRVW…LFVAVIMDNF (264 aa)) is one IV repeat. Residues 1482–1500 (SFEYTIMAMIALNTVVLMM) traverse the membrane as a helical segment. At 1501–1515 (KYYTAPCTYELALKY) the chain is on the extracellular side. The helical transmembrane segment at 1516–1535 (LNIAFTMVFSLECVLKVIAF) threads the bilayer. Over 1536–1543 (GFLNYFRD) the chain is Cytoplasmic. Residues 1544–1562 (TWNIFDFITVIGSITEIIL) form a helical membrane-spanning segment. Residues 1563-1573 (TDSKLVNTSGF) lie on the Extracellular side of the membrane. An N-linked (GlcNAc...) asparagine glycan is attached at Asn1569. A helical transmembrane segment spans residues 1574-1592 (NMSFLKLFRAARLIKLLRQ). The Cytoplasmic portion of the chain corresponds to 1593–1611 (GYTIRILLWTFVQSFKALP). The chain crosses the membrane as a helical span at residues 1612 to 1631 (YVCLLIAMLFFIYAIIGMQV). The Extracellular segment spans residues 1632–1700 (FGNIKLDEES…QNESERCGTD (69 aa)). Asn1692 is a glycosylation site (N-linked (GlcNAc...) asparagine). A helical transmembrane segment spans residues 1701–1726 (LAYVYFVSFIFFCSFLMLNLFVAVIM). The Cytoplasmic portion of the chain corresponds to 1727-2272 (DNFEYLTRDS…LSDTEEDDKC (546 aa)). An EF-hand domain is found at 1742-1777 (HHLDEFVRVWAEYDRAACGRIHYTEMYEMLTLMSPP). Ca(2+) contacts are provided by Asp1755, Arg1761, and Glu1766. Residues 2021-2186 (SAHRLNSDSG…QQGQHPSPQH (166 aa)) form a disordered region. The span at 2025–2045 (LNSDSGHKSDTHRSGGRERGR) shows a compositional bias: basic and acidic residues. Phosphoserine occurs at positions 2054 and 2073. Basic and acidic residues predominate over residues 2061 to 2078 (NSEERGTQADWESPERRQ). Residues 2097 to 2112 (SLSESSIPSISDTSTP) are compositionally biased toward low complexity. The span at 2155–2174 (LASQALESNSACLTESSNSL) shows a compositional bias: polar residues. Residues 2175-2186 (HPQQGQHPSPQH) show a composition bias toward low complexity.

It belongs to the calcium channel alpha-1 subunit (TC 1.A.1.11) family. CACNA1E subfamily. Interacts with EFHC1. Voltage-dependent calcium channels are multisubunit complexes, consisting of alpha-1, alpha-2, beta and delta subunits in a 1:1:1:1 ratio. The channel activity is directed by the pore-forming and voltage-sensitive alpha-1 subunit. In many cases, this subunit is sufficient to generate voltage-sensitive calcium channel activity. The auxiliary subunits beta and alpha-2/delta linked by a disulfide bridge regulate the channel activity. In terms of tissue distribution, expressed in neuronal tissues, retina, spleen, and pancreatic islet cells.

It is found in the membrane. The catalysed reaction is Ca(2+)(in) = Ca(2+)(out). Its function is as follows. Voltage-sensitive calcium channels (VSCC) mediate the entry of calcium ions into excitable cells and are also involved in a variety of calcium-dependent processes, including muscle contraction, hormone or neurotransmitter release, gene expression, cell motility, cell division and cell death. The isoform alpha-1E gives rise to R-type calcium currents. R-type calcium channels belong to the 'high-voltage activated' (HVA) group and are blocked by nickel. They are however insensitive to dihydropyridines (DHP). Calcium channels containing alpha-1E subunit could be involved in the modulation of firing patterns of neurons which is important for information processing. This is Voltage-dependent R-type calcium channel subunit alpha-1E (Cacna1e) from Mus musculus (Mouse).